The chain runs to 86 residues: uncharacterized protein (86 aa).

To C.jejuni CJ0253.

This is an uncharacterized protein from Helicobacter pylori (strain J99 / ATCC 700824) (Campylobacter pylori J99).